The primary structure comprises 213 residues: Kynurenine formamidase (213 aa).

A substrate-binding site is contributed by Trp18. Zn(2+) contacts are provided by His48, His52, and Asp54. His58 functions as the Proton donor/acceptor in the catalytic mechanism. 2 residues coordinate Zn(2+): His160 and Glu172.

It belongs to the Cyclase 1 superfamily. KynB family. Homodimer. It depends on Zn(2+) as a cofactor.

The catalysed reaction is N-formyl-L-kynurenine + H2O = L-kynurenine + formate + H(+). The protein operates within amino-acid degradation; L-tryptophan degradation via kynurenine pathway; L-kynurenine from L-tryptophan: step 2/2. In terms of biological role, catalyzes the hydrolysis of N-formyl-L-kynurenine to L-kynurenine, the second step in the kynurenine pathway of tryptophan degradation. This Burkholderia orbicola (strain MC0-3) protein is Kynurenine formamidase.